A 787-amino-acid chain; its full sequence is MTEKQINVPARAYGFPPDAYDPSLLPDFDVSFLRPEDLEAFIQALSAPDTTQPPDDGLASPRSPSARSFSSFDFTKRASSVLPDDAQVVAAHAAAAGGETAPIPGDNDTNNANGFGNSSSQSLFITAQSDWAPVHEKVVGSQTHRQKKSSRRRKRSKAVAPGRRTRDETREGYLYGLLKWPFLLIVGAWIVGLAVTYLFTRAYIFIYEQFVAWRGRREKLRRNMRATSRYPDWVKAARDLDNFLGNEAWKEQNEFAYYDSKTVRRVWDSLRRSRIRAAQMEASGSQSSSSSNEGKTTPIEDLKVLIEACVKNNFVGVENPRLYSQTYYGTKNLVQNYVDEVEKSLTALLETKQLSMEDKRSIFKRVSANYGRTALCLSGGASFAYYHFGVVKALLEEDLLPDVITGTSGGALVAALVATRTNEELKKLLVPSLSTKITACREPITVWFRRWWSTGARFDSVDWAKQCSWWSHGSMTFREAYERTGRILNVSCVPADPHSPTILCNYLTSPDCVIWSAVLASAAVPGILNPVVLMMKKADGNLAPYSFGHKWKDGSLRTDIPIRALNLQFNVNFTIVSQVNPHINLFFFSSRGSVGQPVTHRRGRGWRGGFLGSATEQYIKLDLTKWLKVLRQLELLPRPLGQDWSQLWLQQSFGGTVTIWPKTILSDFVHILSDPDNARLARMIHEGQQSTFPKIKFISNRLRIERLIERGRRETRPYIRRGSVESIISEDDLRELLLLRGSTNGTDEEITTNDEMEFASDEKAVLTEDEGQFDGVTDNTEGSPLLK.

2 disordered regions span residues 47–69 (APDT…ARSF) and 137–164 (KVVG…PGRR). Over residues 59–69 (ASPRSPSARSF) the composition is skewed to low complexity. A compositionally biased stretch (basic residues) spans 144–157 (HRQKKSSRRRKRSK). A helical transmembrane segment spans residues 180-200 (WPFLLIVGAWIVGLAVTYLFT). Positions 375–566 (LCLSGGASFA…RTDIPIRALN (192 aa)) constitute a PNPLA domain. The GXSXG signature appears at 406–410 (GTSGG). Serine 408 (nucleophile) is an active-site residue. The active-site Proton acceptor is aspartate 553. Residues 745 to 787 (GTDEEITTNDEMEFASDEKAVLTEDEGQFDGVTDNTEGSPLLK) are disordered. Residues 746-759 (TDEEITTNDEMEFA) show a composition bias toward acidic residues. A compositionally biased stretch (polar residues) spans 777–787 (TDNTEGSPLLK).

It belongs to the PLPL family.

It localises to the membrane. Functionally, probable lipid hydrolase. The polypeptide is Patatin-like phospholipase domain-containing protein OOU_Y34scaffold00095g16.3 (Pyricularia oryzae (strain Y34) (Rice blast fungus)).